A 305-amino-acid polypeptide reads, in one-letter code: Divergent heme oxygenase-like protein (305 aa).

The signal sequence occupies residues 1–18; sequence MIRKIIILMFTFFSNIHN. Residues 1-83 form a sufficient for apicoplast targeting region; the sequence is MIRKIIILMF…GVDKNNINYN (83 aa). 3 N-linked (GlcNAc...) asparagine glycosylation sites follow: asparagine 132, asparagine 159, and asparagine 288.

Proteolytically cleaved; targeted by its N-terminal leader sequence for import into the apicoplast where it undergoes proteolytic processing, resulting in an N-terminus starting at or near Gly-33 in the mature protein.

The protein resides in the plastid. It is found in the apicoplast. Functionally, essential for blood-stage parasite viability. Required for apicoplast biogenesis. Associates with the apicoplast genome and mediates apicoplast gene expression. Can bind heme. Can bind protoporphyrin IX. The polypeptide is Divergent heme oxygenase-like protein (Plasmodium falciparum (isolate 3D7)).